We begin with the raw amino-acid sequence, 96 residues long: UPF0235 protein CKO_04329 (96 aa).

Belongs to the UPF0235 family.

This Citrobacter koseri (strain ATCC BAA-895 / CDC 4225-83 / SGSC4696) protein is UPF0235 protein CKO_04329.